The chain runs to 257 residues: Imidazole glycerol phosphate synthase subunit HisF (257 aa).

Residues aspartate 11 and aspartate 130 contribute to the active site.

It belongs to the HisA/HisF family. As to quaternary structure, heterodimer of HisH and HisF.

It localises to the cytoplasm. The enzyme catalyses 5-[(5-phospho-1-deoxy-D-ribulos-1-ylimino)methylamino]-1-(5-phospho-beta-D-ribosyl)imidazole-4-carboxamide + L-glutamine = D-erythro-1-(imidazol-4-yl)glycerol 3-phosphate + 5-amino-1-(5-phospho-beta-D-ribosyl)imidazole-4-carboxamide + L-glutamate + H(+). Its pathway is amino-acid biosynthesis; L-histidine biosynthesis; L-histidine from 5-phospho-alpha-D-ribose 1-diphosphate: step 5/9. Functionally, IGPS catalyzes the conversion of PRFAR and glutamine to IGP, AICAR and glutamate. The HisF subunit catalyzes the cyclization activity that produces IGP and AICAR from PRFAR using the ammonia provided by the HisH subunit. The sequence is that of Imidazole glycerol phosphate synthase subunit HisF from Proteus mirabilis (strain HI4320).